The following is a 418-amino-acid chain: Zinc metalloprotease RasP (418 aa).

4 consecutive transmembrane segments (helical) span residues 5 to 25, 170 to 190, 345 to 365, and 390 to 410; these read LAFI…HLYF, MAIF…LLGL, VIFF…MPIP, and EGAI…VVTW. His-18 contacts Zn(2+). Residue Glu-19 is part of the active site. His-22 serves as a coordination point for Zn(2+). A PDZ domain is found at 183-267; sequence GFVILLGLSL…ALQTNATLSQ (85 aa).

Belongs to the peptidase M50B family. Zn(2+) is required as a cofactor.

It localises to the cell membrane. Is responsible for Site-2 cleavage of the RsiW anti-sigma factor. This results, after a third proteolytic step catalyzed by the ClpXP protease, in the release of SigW and the transcription activation of the genes under the control of the sigma-W factor. The protein is Zinc metalloprotease RasP (rasP) of Shouchella clausii (strain KSM-K16) (Alkalihalobacillus clausii).